The sequence spans 1210 residues: DNA-directed RNA polymerase II subunit RPB2 (1210 aa).

Mg(2+) is bound at residue Asp-826. Zn(2+) is bound by residues Cys-1152, Cys-1155, Cys-1170, and Cys-1173. The C4-type zinc finger occupies Cys-1152–Cys-1173.

Belongs to the RNA polymerase beta chain family. Component of the RNA polymerase II (Pol II) complex consisting of 12 subunits.

The protein resides in the nucleus. The enzyme catalyses RNA(n) + a ribonucleoside 5'-triphosphate = RNA(n+1) + diphosphate. In terms of biological role, DNA-dependent RNA polymerase catalyzes the transcription of DNA into RNA using the four ribonucleoside triphosphates as substrates. Second largest component of RNA polymerase II which synthesizes mRNA precursors and many functional non-coding RNAs. Proposed to contribute to the polymerase catalytic activity and forms the polymerase active center together with the largest subunit. Pol II is the central component of the basal RNA polymerase II transcription machinery. It is composed of mobile elements that move relative to each other. RPB2 is part of the core element with the central large cleft, the clamp element that moves to open and close the cleft and the jaws that are thought to grab the incoming DNA template. The chain is DNA-directed RNA polymerase II subunit RPB2 (rpb2) from Schizosaccharomyces pombe (strain 972 / ATCC 24843) (Fission yeast).